We begin with the raw amino-acid sequence, 673 residues long: Kinesin-like protein KIFC1 (673 aa).

A phosphoserine mark is found at S6, S26, S31, and S33. Disordered stretches follow at residues 23-94 (KAPS…TGPR) and 109-136 (VPAV…KRPA). A compositionally biased stretch (polar residues) spans 60–86 (TKITTSHPRVPSLTTVPQTQGQTTAQK). Residues 142–306 (QLCDLNAELK…RRRLHNQLQE (165 aa)) are a coiled coil. The Kinesin motor domain occupies 310–663 (NIRVFCRVRP…LRFASKVNQC (354 aa)). Positions 325 to 372 (PTPPPGLLLFPSGPGGPSDPPTRLSLSRSDERRGTLSGAPAPPTRHDF) are disordered. The residue at position 359 (T359) is a Phosphothreonine. 410 to 417 (GQTGSGKT) contacts ATP.

This sequence belongs to the TRAFAC class myosin-kinesin ATPase superfamily. Kinesin family. NCD subfamily. In terms of assembly, binds NUBP1 and NUBP2. Interacts with PPP1R42.

It is found in the nucleus. It localises to the cytoplasm. The protein resides in the cytoskeleton. The protein localises to the microtubule organizing center. Its subcellular location is the centrosome. It is found in the spindle. It localises to the early endosome. Its function is as follows. Minus end-directed microtubule-dependent motor required for bipolar spindle formation. May contribute to movement of early endocytic vesicles. Regulates cilium formation and structure. This Homo sapiens (Human) protein is Kinesin-like protein KIFC1 (KIFC1).